The primary structure comprises 351 residues: MVLTKYKAAAVTSEPCWFDLEGGVRKTIDFINEAGQAGCKLVAFPEVWIPGYPYWMWKVTYQQSLPMLKKYRENAMAVDSDEFRRIRRAARDNQIYVSLGFAEIDHATLYLAQALIDPTGEVINHRRKIKPTHVEKLVYGDGAGDTFMSVTPTELGRLGQLNCWENMNPFLKSLNVSMGEQIHIAAWPIYPGKETLKYPDPATNVADPASDLVTPAYAIETGTWTLAPFQRLSVEGLKKNTPEGVEPETDPSTYNGHARIYRPDGSLVVRPDKDFDGLLFVDIDLNECHLTKALADFAGHYMRPDLIRLLVDTSRKELVTEVDRNGGIVQYSTRERLGLNTPLENDKEGKK.

In terms of domain architecture, CN hydrolase spans 6-285 (YKAAAVTSEP…DGLLFVDIDL (280 aa)). Residue E46 is the Proton acceptor of the active site. Residue K128 is part of the active site. Residue C163 is the Nucleophile of the active site.

The protein belongs to the carbon-nitrogen hydrolase superfamily. Nitrilase family. As to quaternary structure, oligomer of dimers, forming left-handed helical fibers with a diameter of 13 nm but with lengths ranging from approximately 1 um at the leading edge of the peak to having approximately the same length and diameter at the trailing edge.

The enzyme catalyses formamide = hydrogen cyanide + H2O. Catalyzes the hydration of cyanide to formamide. Degradation of cyanide may be important for plant pathogenic fungi in infection of cyanogenic plants. The protein is Cyanide hydratase of Neurospora crassa (strain ATCC 24698 / 74-OR23-1A / CBS 708.71 / DSM 1257 / FGSC 987).